The primary structure comprises 357 residues: Arginine kinase Met e 2 (357 aa).

A Phosphagen kinase N-terminal domain is found at 9 to 91 (KLEAGFKKLE…FDPIIEDYHV (83 aa)). 64–68 (GVGIY) is an L-arginine binding site. The region spanning 119–356 (FVISTRVRCG…LELIKIEKEM (238 aa)) is the Phosphagen kinase C-terminal domain. ATP-binding positions include 122–126 (STRVR) and H185. Residue E225 coordinates L-arginine. R229 serves as a coordination point for ATP. Residue C271 coordinates L-arginine. ATP-binding positions include 280 to 284 (RASVH) and 309 to 314 (RGTRGE). Residue E314 participates in L-arginine binding.

It belongs to the ATP:guanido phosphotransferase family.

The catalysed reaction is L-arginine + ATP = N(omega)-phospho-L-arginine + ADP + H(+). Functionally, catalyzes the reversible transfer of high energy ATP gamma-phosphate group to L-arginine. In Metapenaeus ensis (Greasyback shrimp), this protein is Arginine kinase Met e 2.